The sequence spans 603 residues: Isocitrate dehydrogenase kinase/phosphatase (603 aa).

ATP contacts are provided by residues 327-333 (APGIKGL) and Lys-348. Asp-383 is a catalytic residue.

Belongs to the AceK family.

It localises to the cytoplasm. The enzyme catalyses L-seryl-[isocitrate dehydrogenase] + ATP = O-phospho-L-seryl-[isocitrate dehydrogenase] + ADP + H(+). Its function is as follows. Bifunctional enzyme which can phosphorylate or dephosphorylate isocitrate dehydrogenase (IDH) on a specific serine residue. This is a regulatory mechanism which enables bacteria to bypass the Krebs cycle via the glyoxylate shunt in response to the source of carbon. When bacteria are grown on glucose, IDH is fully active and unphosphorylated, but when grown on acetate or ethanol, the activity of IDH declines drastically concomitant with its phosphorylation. This Burkholderia mallei (strain ATCC 23344) protein is Isocitrate dehydrogenase kinase/phosphatase.